Reading from the N-terminus, the 1110-residue chain is Error-prone DNA polymerase (1110 aa).

The interval 1072 to 1110 is disordered; the sequence is LGELHEPLNDDRREHPDNPAQRIRHPRDVRILPPSRDFH. Basic and acidic residues-rich tracts occupy residues 1073–1088 and 1097–1110; these read GELHEPLNDDRREHPD and PRDVRILPPSRDFH.

The protein belongs to the DNA polymerase type-C family. DnaE2 subfamily.

It is found in the cytoplasm. The enzyme catalyses DNA(n) + a 2'-deoxyribonucleoside 5'-triphosphate = DNA(n+1) + diphosphate. Its function is as follows. DNA polymerase involved in damage-induced mutagenesis and translesion synthesis (TLS). It is not the major replicative DNA polymerase. This is Error-prone DNA polymerase from Rhodopseudomonas palustris (strain BisB5).